Here is a 72-residue protein sequence, read N- to C-terminus: Translation initiation factor IF-1 1 (72 aa).

One can recognise an S1-like domain in the interval methionine 1–lysine 72.

This sequence belongs to the IF-1 family. In terms of assembly, component of the 30S ribosomal translation pre-initiation complex which assembles on the 30S ribosome in the order IF-2 and IF-3, IF-1 and N-formylmethionyl-tRNA(fMet); mRNA recruitment can occur at any time during PIC assembly.

Its subcellular location is the cytoplasm. Functionally, one of the essential components for the initiation of protein synthesis. Stabilizes the binding of IF-2 and IF-3 on the 30S subunit to which N-formylmethionyl-tRNA(fMet) subsequently binds. Helps modulate mRNA selection, yielding the 30S pre-initiation complex (PIC). Upon addition of the 50S ribosomal subunit IF-1, IF-2 and IF-3 are released leaving the mature 70S translation initiation complex. The polypeptide is Translation initiation factor IF-1 1 (Polynucleobacter asymbioticus (strain DSM 18221 / CIP 109841 / QLW-P1DMWA-1) (Polynucleobacter necessarius subsp. asymbioticus)).